The following is a 353-amino-acid chain: Photosystem II protein D1 (353 aa).

Position 2 is an N-acetylthreonine (Thr2). Phosphothreonine is present on Thr2. 3 helical membrane-spanning segments follow: residues 29–46, 118–133, and 142–156; these read YIGW…TATS, HFLL…EWEL, and WIAV…AATA. Residue His118 coordinates chlorophyll a. Tyr126 serves as a coordination point for pheophytin a. Asp170 and Glu189 together coordinate [CaMn4O5] cluster. Residues 197-218 traverse the membrane as a helical segment; that stretch reads FHMLGVAGVFGGSLFSAMHGSL. His198 is a chlorophyll a binding site. A quinone-binding positions include His215 and 264-265; that span reads SF. His215 is a Fe cation binding site. A Fe cation-binding site is contributed by His272. The helical transmembrane segment at 274 to 288 threads the bilayer; that stretch reads FLAAWPVVGIWFTAL. His332, Glu333, Asp342, and Ala344 together coordinate [CaMn4O5] cluster. A propeptide spanning residues 345–353 is cleaved from the precursor; that stretch reads AIEAPSTNG.

Belongs to the reaction center PufL/M/PsbA/D family. As to quaternary structure, PSII is composed of 1 copy each of membrane proteins PsbA, PsbB, PsbC, PsbD, PsbE, PsbF, PsbH, PsbI, PsbJ, PsbK, PsbL, PsbM, PsbT, PsbX, PsbY, PsbZ, Psb30/Ycf12, at least 3 peripheral proteins of the oxygen-evolving complex and a large number of cofactors. It forms dimeric complexes. The D1/D2 heterodimer binds P680, chlorophylls that are the primary electron donor of PSII, and subsequent electron acceptors. It shares a non-heme iron and each subunit binds pheophytin, quinone, additional chlorophylls, carotenoids and lipids. D1 provides most of the ligands for the Mn4-Ca-O5 cluster of the oxygen-evolving complex (OEC). There is also a Cl(-1) ion associated with D1 and D2, which is required for oxygen evolution. The PSII complex binds additional chlorophylls, carotenoids and specific lipids. is required as a cofactor. Tyr-161 forms a radical intermediate that is referred to as redox-active TyrZ, YZ or Y-Z. In terms of processing, C-terminally processed by CTPA; processing is essential to allow assembly of the oxygen-evolving complex and thus photosynthetic growth.

It is found in the plastid. It localises to the chloroplast thylakoid membrane. It catalyses the reaction 2 a plastoquinone + 4 hnu + 2 H2O = 2 a plastoquinol + O2. Photosystem II (PSII) is a light-driven water:plastoquinone oxidoreductase that uses light energy to abstract electrons from H(2)O, generating O(2) and a proton gradient subsequently used for ATP formation. It consists of a core antenna complex that captures photons, and an electron transfer chain that converts photonic excitation into a charge separation. The D1/D2 (PsbA/PsbD) reaction center heterodimer binds P680, the primary electron donor of PSII as well as several subsequent electron acceptors. In Gossypium barbadense (Sea Island cotton), this protein is Photosystem II protein D1.